Reading from the N-terminus, the 110-residue chain is MEIEKTNRMNALFEFYAALLTDKQMNYIELYYADDYSLAEIAEEFDVSRQAVYDNIKRTEKILEDYEMKLHMYSDYVVRSEIFDAIMKKYPNDPYLQNKISILTTIDNRD.

The protein belongs to the UPF0122 family.

Its function is as follows. Might take part in the signal recognition particle (SRP) pathway. This is inferred from the conservation of its genetic proximity to ftsY/ffh. May be a regulatory protein. This is UPF0122 protein SMU_1061 (ylxM) from Streptococcus mutans serotype c (strain ATCC 700610 / UA159).